We begin with the raw amino-acid sequence, 531 residues long: SWI/SNF-related matrix-associated actin-dependent regulator of chromatin subfamily D member 2 (531 aa).

The tract at residues 20–85 is disordered; it reads AVAAALGAPP…MSPGSRMPMA (66 aa). Low complexity predominate over residues 34-45; the sequence is PGMLPSPALRGP. Asymmetric dimethylarginine is present on residues Arg81 and Arg104. Ser203 is modified (phosphoserine). The segment at 205–226 is disordered; that stretch reads SKADGDNAGTAGTPGGTPAADK. Over residues 210-225 the composition is skewed to low complexity; it reads DNAGTAGTPGGTPAAD. Phosphothreonine is present on Thr217. Lys226 participates in a covalent cross-link: Glycyl lysine isopeptide (Lys-Gly) (interchain with G-Cter in SUMO2). The SWIB/MDM2 domain maps to 306 to 383; sequence HQPPQYKLDP…PMKLAGLLQH (78 aa).

It belongs to the SMARCD family. As to quaternary structure, component of the multiprotein chromatin-remodeling complexes SWI/SNF: SWI/SNF-A (BAF), SWI/SNF-B (PBAF) and related complexes. The canonical complex contains a catalytic subunit (either SMARCA4/BRG1/BAF190A or SMARCA2/BRM/BAF190B), and at least SMARCE1, ACTL6A/BAF53, SMARCC1/BAF155, SMARCC2/BAF170, and SMARCB1/SNF5/BAF47. Other subunits specific to each of the complexes may also be present permitting several possible combinations developmentally and tissue specific. Component of the BAF complex, which includes at least actin (ACTB), ARID1A/BAF250A, ARID1B/BAF250B, SMARCA2/BRM, SMARCA4/BRG1, ACTL6A/BAF53, ACTL6B/BAF53B, SMARCE1/BAF57, SMARCC1/BAF155, SMARCC2/BAF170, SMARCB1/SNF5/INI1, and one or more SMARCD1/BAF60A, SMARCD2/BAF60B, or SMARCD3/BAF60C. In muscle cells, the BAF complex also contains DPF3. Component of the SWI/SNF-B (PBAF) chromatin remodeling complex, at least composed of SMARCA4/BRG1, SMARCB1/BAF47/SNF5, ACTL6A/BAF53A or ACTL6B/BAF53B, SMARCE1/BAF57, SMARCD1/BAF60A, SMARCD2/BAF60B, perhaps SMARCD3/BAF60C, SMARCC1/BAF155, SMARCC2/BAF170, PBRM1/BAF180, ARID2/BAF200 and actin (ACTB). Interacts with UNKL. Interacts with CEBPE. Post-translationally, ubiquitinated through a signaling process involving RAC1 and the RING finger protein UNKL.

It is found in the nucleus. In terms of biological role, involved in transcriptional activation and repression of select genes by chromatin remodeling (alteration of DNA-nucleosome topology). Component of SWI/SNF chromatin remodeling complexes that carry out key enzymatic activities, changing chromatin structure by altering DNA-histone contacts within a nucleosome in an ATP-dependent manner. Critical regulator of myeloid differentiation, controlling granulocytopoiesis and the expression of genes involved in neutrophil granule formation. This is SWI/SNF-related matrix-associated actin-dependent regulator of chromatin subfamily D member 2 (Smarcd2) from Mus musculus (Mouse).